A 270-amino-acid polypeptide reads, in one-letter code: Ribosomal RNA small subunit methyltransferase A (270 aa).

S-adenosyl-L-methionine is bound by residues Asn15, Ile17, Gly42, Glu64, Asp89, and Asn108.

It belongs to the class I-like SAM-binding methyltransferase superfamily. rRNA adenine N(6)-methyltransferase family. RsmA subfamily.

It is found in the cytoplasm. It carries out the reaction adenosine(1518)/adenosine(1519) in 16S rRNA + 4 S-adenosyl-L-methionine = N(6)-dimethyladenosine(1518)/N(6)-dimethyladenosine(1519) in 16S rRNA + 4 S-adenosyl-L-homocysteine + 4 H(+). Specifically dimethylates two adjacent adenosines (A1518 and A1519) in the loop of a conserved hairpin near the 3'-end of 16S rRNA in the 30S particle. May play a critical role in biogenesis of 30S subunits. The protein is Ribosomal RNA small subunit methyltransferase A of Anaplasma marginale (strain Florida).